A 256-amino-acid polypeptide reads, in one-letter code: Photosystem I chlorophyll a/b-binding protein 5, chloroplastic (256 aa).

The transit peptide at 1 to 32 (MAVVLRGGITGGFLHHRRDASSVITRRISSVK) directs the protein to the chloroplast. A33 is modified (N-acetylalanine). W49 lines the chlorophyll b pocket. The chlorophyll a site is built by F69 and E88. R93 serves as a coordination point for chlorophyll b. The next 2 helical transmembrane spans lie at 94 to 113 (FAML…TTGI) and 129 to 146 (FAST…MGFA). Positions 147 and 150 each coordinate chlorophyll b. 6 residues coordinate chlorophyll a: K205, E206, N209, R211, Q223, and H238. Residues 212 to 232 (LAMMAMLGFFVQASVTHTGPI) traverse the membrane as a helical segment.

The protein belongs to the light-harvesting chlorophyll a/b-binding (LHC) protein family. In terms of assembly, the LHC complex consists of chlorophyll a-b binding proteins. Homodimer. Heterodimer with LHCA2 and, possibly, LHCA3. Can substitute to LHCA4 to form a complex with LHCA1. Binds pigments. Element of the NAD(P)H dehydrogenase-photosystem I supercomplex (NDH-PSI). Binds at least 14 chlorophylls (8 Chl-a and 6 Chl-b) and carotenoids such as lutein and neoxanthin. serves as cofactor. In terms of processing, photoregulated by reversible phosphorylation of its threonine residues.

The protein resides in the plastid. It localises to the chloroplast thylakoid membrane. In terms of biological role, the light-harvesting complex (LHC) functions as a light receptor, it captures and delivers excitation energy to photosystems with which it is closely associated. Seems involved in the function of the photosystem I in low light conditions, when other LHCA proteins are less abundant. Required, together with LHCA6, for the formation of a full-size NAD(P)H dehydrogenase-photosystem I supercomplex (NDH-PSI) that triggers cyclic and chlororespiratory electron transport in chloroplast thylakoids, especially under stress conditions (e.g. increased light intensity). The protein is Photosystem I chlorophyll a/b-binding protein 5, chloroplastic of Arabidopsis thaliana (Mouse-ear cress).